The following is a 446-amino-acid chain: Phosphoglucosamine mutase (446 aa).

The active-site Phosphoserine intermediate is the serine 103. Mg(2+) is bound by residues serine 103, aspartate 242, aspartate 244, and aspartate 246. Residue serine 103 is modified to Phosphoserine.

The protein belongs to the phosphohexose mutase family. It depends on Mg(2+) as a cofactor. Post-translationally, activated by phosphorylation.

The enzyme catalyses alpha-D-glucosamine 1-phosphate = D-glucosamine 6-phosphate. In terms of biological role, catalyzes the conversion of glucosamine-6-phosphate to glucosamine-1-phosphate. The sequence is that of Phosphoglucosamine mutase from Corynebacterium urealyticum (strain ATCC 43042 / DSM 7109).